Reading from the N-terminus, the 208-residue chain is Large ribosomal subunit protein uL3 (208 aa).

Residues 116-148 (GFQGVIKRHGQSRGPMAHGSRYHRRPGSMGPVA) are disordered.

This sequence belongs to the universal ribosomal protein uL3 family. In terms of assembly, part of the 50S ribosomal subunit. Forms a cluster with proteins L14 and L19.

Its function is as follows. One of the primary rRNA binding proteins, it binds directly near the 3'-end of the 23S rRNA, where it nucleates assembly of the 50S subunit. The chain is Large ribosomal subunit protein uL3 from Streptococcus pyogenes serotype M6 (strain ATCC BAA-946 / MGAS10394).